The sequence spans 155 residues: Molybdopterin synthase catalytic subunit (155 aa).

Substrate contacts are provided by residues 109 to 110 (HR), Lys125, and 132 to 134 (KKE).

Belongs to the MoaE family. MOCS2B subfamily. Heterotetramer; composed of 2 small (MOCS2A) and 2 large (MOCS2B) subunits.

The protein resides in the cytoplasm. The protein localises to the cytosol. It carries out the reaction 2 [molybdopterin-synthase sulfur-carrier protein]-C-terminal-Gly-aminoethanethioate + cyclic pyranopterin phosphate + H2O = molybdopterin + 2 [molybdopterin-synthase sulfur-carrier protein]-C-terminal Gly-Gly + 2 H(+). It functions in the pathway cofactor biosynthesis; molybdopterin biosynthesis. Functionally, catalytic subunit of the molybdopterin synthase complex, a complex that catalyzes the conversion of precursor Z into molybdopterin. Acts by mediating the incorporation of 2 sulfur atoms from thiocarboxylated MOCS2A into precursor Z to generate a dithiolene group. This chain is Molybdopterin synthase catalytic subunit, found in Taeniopygia guttata (Zebra finch).